Here is a 65-residue protein sequence, read N- to C-terminus: MKKTCVVSVFLVLLLLKFHDLSMGEEISPLKKVAPREQIFPCPGFPCPKGYFCDKGSQKCREGTD.

Positions 1 to 24 (MKKTCVVSVFLVLLLLKFHDLSMG) are cleaved as a signal peptide. Positions 25–36 (EEISPLKKVAPR) are excised as a propeptide. Intrachain disulfides connect Cys-42–Cys-53 and Cys-47–Cys-60.

In terms of tissue distribution, expressed by the venom gland.

The protein localises to the secreted. Its function is as follows. Voltage-gated potassium channel inhibitor. This Scolopendra dehaani (Thai centipede) protein is Kappa-scoloptoxin(04)-Ssd1a.